A 126-amino-acid polypeptide reads, in one-letter code: Ribonuclease VapC23 (126 aa).

The region spanning 2–118 (IFVDTNVFMY…GVTRIKTFDH (117 aa)) is the PINc domain. Mg(2+)-binding residues include aspartate 5 and aspartate 98.

Belongs to the PINc/VapC protein family. Mg(2+) serves as cofactor.

Functionally, toxic component of a type II toxin-antitoxin (TA) system. An RNase. The cognate antitoxin is VapB23. The chain is Ribonuclease VapC23 from Mycobacterium tuberculosis (strain CDC 1551 / Oshkosh).